Here is a 1486-residue protein sequence, read N- to C-terminus: MIERGKFRSLTLINWNGFFARTFDLDELVTTLSGGNGAGKSTTMAAFVTALIPDLTLLHFRNTTEAGATSGSRDKGLHGKLKAGVCYSMLDTINSRHQRVVVGVRLQQVAGRDRKVDIKPFAIQGLPMSVLPTQLVTETLNERQARVLPLNELKDKLEAMEGVQFKQFNSITDYHSLMFDLGIIARRLRSASDRSKFYRLIEASLYGGISSAITRSLRDYLLPENSGVRKAFQDMEAALRENRMTLEAIRVTQSDRDLFKHLISEATNYVAADYMRHANERRVHLDKALEFRRELHTSRQQLAAEQYKHVDMARELAEHNGAEGDLEADYQAASDHLNLVQTALRQQEKIERYEADLDELQIRLEEQNEVVAEAIERQEENEARAEAAELEVDELKSQLADYQQALDVQQTRAIQYNQAVAALNRAKELCHLPDLTADSAAEWLETFQAKELEATEKMLSLEQKMSMAQTAHSQFEQAYQLVVAINGPLARNEAWDVARELLREGVDQRHLAEQVQPLRMRLSELEQRLREQQEAERLLADFCKRQGKNFDIDELEALHQELEARIASLSDSVSNAREERMALRQEQEQLQSRIQSLMQRAPVWLAAQNSLNQLSEQCGEEFSSSQDVTEYLQQLLEREREAIVERDEVGARKNAVDEEIERLSQPGGSEDQRLNALAERFGGVLLSEIYDDVSLEDAPYFSALYGPSRHAIVVPDLSQVTEHLEGLTDCPEDLYLIEGDPQSFDDSVFSVDELEKAVVVKIADRQWRYSRFPEVPLFGRAARESRIESLHAEREVLSERFATLSFDVQKTQRLHQAFSRFIGSHLAVAFESDPEAEIRQLNSRRVELERALSNHENDNQQQRIQFEQAKEGVTALNRILPRLNLLADDSLADRVDEIRERLDEAQEAARFVQQFGNQLAKLEPIVSVLQSDPEQFEQLKEDYAYSQQMQRDARQQAFALTEVVQRRAHFSYSDSAEMLSGNSDLNEKLRERLEQAEAERTRAREALRGHAAQLSQYNQVLASLKSSYDTKKELLNDLQRELQDIGVRADSGAEERARIRRDELHAQLSNNRSRRNQLEKALTFCEAEMDNLTRKLRKLERDYFEMREQVVTAKAGWCAVMRMVKDNGVERRLHRRELAYLSADDLRSMSDKALGALRLAVADNEHLRDVLRMSEDPKRPERKIQFFVAVYQHLRERIRQDIIRTDDPVEAIEQMEIELSRLTEELTSREQKLAISSRSVANIIRKTIQREQNRIRMLNQGLQNVSFGQVNSVRLNVNVRETHAMLLDVLSEQHEQHQDLFNSNRLTFSEALAKLYQRLNPQIDMGQRTPQTIGEELLDYRNYLEMEVEVNRGSDGWLRAESGALSTGEAIGTGMSILVMVVQSWEDESRRLRGKDISPCRLLFLDEAARLDARSIATLFELCERLQMQLIIAAPENISPEKGTTYKLVRKVFQNTEHVHVVGLRGFAPQLPETLPGSDEAPSQAS.

34 to 41 serves as a coordination point for ATP; it reads GGNGAGKS. Coiled coils occupy residues 326-418, 444-480, and 509-603; these read LEAD…QYNQ, LETFQAKELEATEKMLSLEQKMSMAQTAHSQFEQAYQ, and RHLA…RAPV. The tract at residues 666 to 783 is flexible hinge; the sequence is PGGSEDQRLN…EVPLFGRAAR (118 aa). Coiled coils occupy residues 835-923, 977-1115, and 1209-1266; these read EAEI…AKLE, EMLS…TAKA, and VEAI…QNVS.

It belongs to the SMC family. MukB subfamily. Homodimerization via its hinge domain. Binds to DNA via its C-terminal region. Interacts, and probably forms a ternary complex, with MukE and MukF via its C-terminal region. The complex formation is stimulated by calcium or magnesium. Interacts with tubulin-related protein FtsZ.

It localises to the cytoplasm. The protein resides in the nucleoid. In terms of biological role, plays a central role in chromosome condensation, segregation and cell cycle progression. Functions as a homodimer, which is essential for chromosome partition. Involved in negative DNA supercoiling in vivo, and by this means organize and compact chromosomes. May achieve or facilitate chromosome segregation by condensation DNA from both sides of a centrally located replisome during cell division. This Escherichia coli O17:K52:H18 (strain UMN026 / ExPEC) protein is Chromosome partition protein MukB.